We begin with the raw amino-acid sequence, 335 residues long: Biotin synthase (335 aa).

One can recognise a Radical SAM core domain in the interval 43 to 269 (YFGKKVKLNM…INPTKEIRIA (227 aa)). The [4Fe-4S] cluster site is built by C61, C65, and C68. Positions 104, 137, 197, and 267 each coordinate [2Fe-2S] cluster.

This sequence belongs to the radical SAM superfamily. Biotin synthase family. As to quaternary structure, homodimer. It depends on [4Fe-4S] cluster as a cofactor. [2Fe-2S] cluster serves as cofactor.

It carries out the reaction (4R,5S)-dethiobiotin + (sulfur carrier)-SH + 2 reduced [2Fe-2S]-[ferredoxin] + 2 S-adenosyl-L-methionine = (sulfur carrier)-H + biotin + 2 5'-deoxyadenosine + 2 L-methionine + 2 oxidized [2Fe-2S]-[ferredoxin]. The protein operates within cofactor biosynthesis; biotin biosynthesis; biotin from 7,8-diaminononanoate: step 2/2. In terms of biological role, catalyzes the conversion of dethiobiotin (DTB) to biotin by the insertion of a sulfur atom into dethiobiotin via a radical-based mechanism. The polypeptide is Biotin synthase (Staphylococcus aureus (strain USA300)).